The primary structure comprises 124 residues: Large ribosomal subunit protein bL12 (124 aa).

It belongs to the bacterial ribosomal protein bL12 family. In terms of assembly, homodimer. Part of the ribosomal stalk of the 50S ribosomal subunit. Forms a multimeric L10(L12)X complex, where L10 forms an elongated spine to which 2 to 4 L12 dimers bind in a sequential fashion. Binds GTP-bound translation factors.

Forms part of the ribosomal stalk which helps the ribosome interact with GTP-bound translation factors. Is thus essential for accurate translation. The polypeptide is Large ribosomal subunit protein bL12 (Jannaschia sp. (strain CCS1)).